A 347-amino-acid polypeptide reads, in one-letter code: Isopentenyl-diphosphate delta-isomerase (347 aa).

Positions 1 to 31 (MDESNSQFEKRKRDHIRIALDPRSQTDGQNG) are disordered. Positions 8 to 20 (FEKRKRDHIRIAL) are enriched in basic and acidic residues. 11-12 (RK) contributes to the substrate binding site. Residues S72, 73–75 (SMT), S103, and N132 each bind FMN. Residue 103 to 105 (SQR) participates in substrate binding. Q166 serves as a coordination point for substrate. E167 provides a ligand contact to Mg(2+). FMN-binding positions include K198, S223, T228, 279 to 281 (GVR), and 300 to 301 (AK).

This sequence belongs to the IPP isomerase type 2 family. In terms of assembly, homooctamer. Dimer of tetramers. Requires FMN as cofactor. It depends on NADPH as a cofactor. Mg(2+) serves as cofactor.

It is found in the cytoplasm. It catalyses the reaction isopentenyl diphosphate = dimethylallyl diphosphate. Functionally, involved in the biosynthesis of isoprenoids. Catalyzes the 1,3-allylic rearrangement of the homoallylic substrate isopentenyl (IPP) to its allylic isomer, dimethylallyl diphosphate (DMAPP). In Bdellovibrio bacteriovorus (strain ATCC 15356 / DSM 50701 / NCIMB 9529 / HD100), this protein is Isopentenyl-diphosphate delta-isomerase.